The sequence spans 103 residues: Large ribosomal subunit protein bL21 (103 aa).

It belongs to the bacterial ribosomal protein bL21 family. In terms of assembly, part of the 50S ribosomal subunit. Contacts protein L20.

In terms of biological role, this protein binds to 23S rRNA in the presence of protein L20. The sequence is that of Large ribosomal subunit protein bL21 from Caldicellulosiruptor saccharolyticus (strain ATCC 43494 / DSM 8903 / Tp8T 6331).